A 197-amino-acid chain; its full sequence is Scoloptoxin SSD20 (197 aa).

A signal peptide spans 1–6 (PPMTTE).

Expressed by the venom gland.

It is found in the secreted. In terms of biological role, may act as a voltage-gated potassium channel inhibitor. Is highly similar to the subunit beta of SSD14 which, when complexed with subunit alpha, induces platelet aggregation and hemolysis. The sequence is that of Scoloptoxin SSD20 from Scolopendra dehaani (Thai centipede).